A 259-amino-acid polypeptide reads, in one-letter code: Cobalt-precorrin-4 C(11)-methyltransferase (259 aa).

Belongs to the precorrin methyltransferase family.

It catalyses the reaction Co-precorrin-4 + S-adenosyl-L-methionine = Co-precorrin-5A + S-adenosyl-L-homocysteine + H(+). It functions in the pathway cofactor biosynthesis; adenosylcobalamin biosynthesis; cob(II)yrinate a,c-diamide from sirohydrochlorin (anaerobic route): step 4/10. Functionally, catalyzes the methylation of C-11 in cobalt-precorrin-4 to form cobalt-precorrin-5A. The chain is Cobalt-precorrin-4 C(11)-methyltransferase (cbiF) from Methanocaldococcus jannaschii (strain ATCC 43067 / DSM 2661 / JAL-1 / JCM 10045 / NBRC 100440) (Methanococcus jannaschii).